We begin with the raw amino-acid sequence, 420 residues long: Phosphoglycerate kinase, cytosolic (420 aa).

Residues Val23, Asp24, Phe25, Asn26, Arg39, Ser61, His62, Gly64, Arg65, Arg135, His171, and Arg172 each coordinate (2R)-3-phosphoglycerate. ADP contacts are provided by Gly217 and Ala218. Gly217 provides a ligand contact to CDP. Residues Ala218 and Lys219 each contribute to the AMP site. An ATP-binding site is contributed by Ala218. Mg(2+) is bound at residue Ala218. Lys219 contacts (2R)-3-phosphoglycerate. Position 222 (Asp222) interacts with CDP. Asp222 serves as a coordination point for Mg(2+). ADP-binding residues include Lys223 and Gly241. Lys223 provides a ligand contact to AMP. Residue Lys223 coordinates ATP. Gly241 is a binding site for CDP. Positions 242 and 314 each coordinate AMP. Residues Ala242 and Ala314 each contribute to the ATP site. ADP contacts are provided by Ala314 and Asn338. Gly339 and Phe344 together coordinate CDP. Residues Phe344, Glu345, Glu377, and Ser378 each coordinate ADP. Glu345 is a binding site for AMP. 3 residues coordinate ATP: Glu345, Glu377, and Ser378. Glu377 lines the Mg(2+) pocket.

The protein belongs to the phosphoglycerate kinase family. Monomer. Mg(2+) is required as a cofactor.

It is found in the cytoplasm. It carries out the reaction (2R)-3-phosphoglycerate + ATP = (2R)-3-phospho-glyceroyl phosphate + ADP. It participates in carbohydrate degradation; glycolysis; pyruvate from D-glyceraldehyde 3-phosphate: step 2/5. This is Phosphoglycerate kinase, cytosolic from Trypanosoma brucei brucei.